We begin with the raw amino-acid sequence, 142 residues long: Large ribosomal subunit protein uL11 (142 aa).

Belongs to the universal ribosomal protein uL11 family. In terms of assembly, part of the ribosomal stalk of the 50S ribosomal subunit. Interacts with L10 and the large rRNA to form the base of the stalk. L10 forms an elongated spine to which L12 dimers bind in a sequential fashion forming a multimeric L10(L12)X complex. Post-translationally, one or more lysine residues are methylated.

Functionally, forms part of the ribosomal stalk which helps the ribosome interact with GTP-bound translation factors. The protein is Large ribosomal subunit protein uL11 of Beijerinckia indica subsp. indica (strain ATCC 9039 / DSM 1715 / NCIMB 8712).